The chain runs to 729 residues: Circadian input-output histidine kinase CikA (729 aa).

The interval 1 to 169 (MPQPIFDRIL…QVTTQIRQSL (169 aa)) is N-terminal domain. The tract at residues 170 to 314 (ELPELLKIAV…VEFLTHLSQH (145 aa)) is GAF domain. Positions 366 to 587 (TMSHELRTPL…TFTVGLPAIS (222 aa)) constitute a Histidine kinase domain. Phosphohistidine; by autocatalysis is present on His369. The segment at 613–729 (EGRIVLVSED…GLTSLATSAQ (117 aa)) is psR domain, binds KaiB.

This sequence in the N-terminal section; belongs to the phytochrome family. In terms of assembly, homodimer. Part of the circadian clock (KaiA, KaiB, KaiC, CikA, RpaA, SasA), the composition of which varies during the circadian cycle. KaiA and CikA compete for binding to KaiB(fs). The PsR domain binds the KaiB:KaiC CI complex but poorly to either protein alone. KaiA and CikA bind to the same region of the KaiB(fs) form and therefore compete.

It carries out the reaction ATP + protein L-histidine = ADP + protein N-phospho-L-histidine.. Functions in an input pathway to the Kai circadian clock. Senses oxidized quinones via its C-terminal pseudo-receiver domain, providing a link between cell metabolism and the clock. Affects the ratio of phosphorylated to unphosphorylated KaiC, binds quinones via its pseudo-receptor domain. Quinone-binding destabilizes the protein rapidly. Autophosphorylates, does not transfer the phosphate to its pseudo-receiver (PsR) domain. May play a role in cell division. In terms of biological role, also functions in a two-component CikA/RpaA output pathway from the circadian clock, negatively regulating kaiBC expression independently of labA and of sasA. One of three clock output pathways. Dephosphorylates phospho-RpaA, enhanced by KaiB and KaiC, has only modest kinase activity on RpaA. This Thermosynechococcus vestitus (strain NIES-2133 / IAM M-273 / BP-1) protein is Circadian input-output histidine kinase CikA.